A 100-amino-acid chain; its full sequence is Integration host factor subunit alpha (100 aa).

The segment at 53–72 is disordered; the sequence is FDLRDKKQRPGRNPKTGEEI.

This sequence belongs to the bacterial histone-like protein family. Heterodimer of an alpha and a beta chain.

Its function is as follows. This protein is one of the two subunits of integration host factor, a specific DNA-binding protein that functions in genetic recombination as well as in transcriptional and translational control. In Marinobacter nauticus (strain ATCC 700491 / DSM 11845 / VT8) (Marinobacter aquaeolei), this protein is Integration host factor subunit alpha.